The primary structure comprises 97 residues: Co-chaperonin GroES (97 aa).

Belongs to the GroES chaperonin family. As to quaternary structure, heptamer of 7 subunits arranged in a ring. Interacts with the chaperonin GroEL.

The protein resides in the cytoplasm. Its function is as follows. Together with the chaperonin GroEL, plays an essential role in assisting protein folding. The GroEL-GroES system forms a nano-cage that allows encapsulation of the non-native substrate proteins and provides a physical environment optimized to promote and accelerate protein folding. GroES binds to the apical surface of the GroEL ring, thereby capping the opening of the GroEL channel. This is Co-chaperonin GroES from Buchnera aphidicola subsp. Cinara cedri (strain Cc).